Here is a 417-residue protein sequence, read N- to C-terminus: RH-like protein IC (417 aa).

11 helical membrane passes run 12-32, 44-64, 77-97, 125-145, 172-192, 203-223, 238-258, 265-285, 287-307, 331-351, and 358-378; these read CLPL…YFFT, LVAS…GFGF, VAFN…LDGF, ISAG…MVLV, FYVF…KPLP, TIPS…WPSF, VFNT…VSSL, INMT…GTSC, LITS…ISIG, NFSL…VLHT, and MVGF…AIAV.

Belongs to the ammonium transporter (TC 2.A.49) family. Rh subfamily.

It localises to the membrane. Its function is as follows. May be part of an oligomeric complex which is likely to have a transport or channel function in the erythrocyte membrane. The protein is RH-like protein IC of Gorilla gorilla gorilla (Western lowland gorilla).